The following is a 122-amino-acid chain: Ribosome-binding factor A (122 aa).

Belongs to the RbfA family. In terms of assembly, monomer. Binds 30S ribosomal subunits, but not 50S ribosomal subunits or 70S ribosomes.

The protein localises to the cytoplasm. Functionally, one of several proteins that assist in the late maturation steps of the functional core of the 30S ribosomal subunit. Associates with free 30S ribosomal subunits (but not with 30S subunits that are part of 70S ribosomes or polysomes). Required for efficient processing of 16S rRNA. May interact with the 5'-terminal helix region of 16S rRNA. The polypeptide is Ribosome-binding factor A (Dichelobacter nodosus (strain VCS1703A)).